Here is a 267-residue protein sequence, read N- to C-terminus: tRNA pseudouridine synthase A (267 aa).

The active-site Nucleophile is D55. Y111 lines the substrate pocket.

Belongs to the tRNA pseudouridine synthase TruA family.

It carries out the reaction uridine(38/39/40) in tRNA = pseudouridine(38/39/40) in tRNA. Functionally, formation of pseudouridine at positions 38, 39 and 40 in the anticodon stem and loop of transfer RNAs. The protein is tRNA pseudouridine synthase A of Thermococcus gammatolerans (strain DSM 15229 / JCM 11827 / EJ3).